The sequence spans 91 residues: Small ribosomal subunit protein bS16 (91 aa).

This sequence belongs to the bacterial ribosomal protein bS16 family.

This is Small ribosomal subunit protein bS16 from Exiguobacterium sibiricum (strain DSM 17290 / CCUG 55495 / CIP 109462 / JCM 13490 / 255-15).